The sequence spans 98 residues: Cell cycle protein GpsB (98 aa).

Residues 34 to 71 (LDLIIKDYEAFQQEIDELRQENARLKRQVEELQKRPAM) adopt a coiled-coil conformation.

It belongs to the GpsB family. As to quaternary structure, forms polymers through the coiled coil domains. Interacts with PBP1, MreC and EzrA.

Its subcellular location is the cytoplasm. Its function is as follows. Divisome component that associates with the complex late in its assembly, after the Z-ring is formed, and is dependent on DivIC and PBP2B for its recruitment to the divisome. Together with EzrA, is a key component of the system that regulates PBP1 localization during cell cycle progression. Its main role could be the removal of PBP1 from the cell pole after pole maturation is completed. Also contributes to the recruitment of PBP1 to the division complex. Not essential for septum formation. In Geobacillus kaustophilus (strain HTA426), this protein is Cell cycle protein GpsB.